We begin with the raw amino-acid sequence, 339 residues long: DNA-directed RNA polymerase subunit alpha (339 aa).

The interval 1-233 (MVREEITGST…DLFLPFIHTE (233 aa)) is alpha N-terminal domain (alpha-NTD). The interval 266–339 (GIPLNCIFID…IDLPKNKFSL (74 aa)) is alpha C-terminal domain (alpha-CTD).

It belongs to the RNA polymerase alpha chain family. In plastids the minimal PEP RNA polymerase catalytic core is composed of four subunits: alpha, beta, beta', and beta''. When a (nuclear-encoded) sigma factor is associated with the core the holoenzyme is formed, which can initiate transcription.

It is found in the plastid. The protein resides in the chloroplast. It catalyses the reaction RNA(n) + a ribonucleoside 5'-triphosphate = RNA(n+1) + diphosphate. In terms of biological role, DNA-dependent RNA polymerase catalyzes the transcription of DNA into RNA using the four ribonucleoside triphosphates as substrates. This is DNA-directed RNA polymerase subunit alpha from Saccharum hybrid (Sugarcane).